Reading from the N-terminus, the 450-residue chain is Protein tailless (450 aa).

The nuclear receptor DNA-binding region spans 31–108 (HVPCKVCRDH…VGMNKDAVQH (78 aa)). 2 NR C4-type zinc fingers span residues 34-54 (CKVC…CDGC) and 70-96 (CKSQ…LRKC). The region spanning 187–448 (VPRVPHHPVH…RLISDMYSQR (262 aa)) is the NR LBD domain.

This sequence belongs to the nuclear hormone receptor family. NR2 subfamily. As to quaternary structure, monomer.

It is found in the nucleus. Functionally, orphan receptor that binds DNA as a monomer to hormone response elements (HRE) containing an extended core motif half-site sequence 5'-AAGTCA-3' in which the 5' flanking nucleotides participate in determining receptor specificity. This receptor binds to the consensus sequence [AG][AG]AAGTCAA. Plays a key role in the establishment of non-metameric domains at the anterior and posterior poles of the embryo. It may also play a role in the nervous system. The maternal terminal pathway activates the tll gene in the termini; TLL activity then represses segmentation and activates terminal-specific genes in these domains. Involved in the regulation of early eye development. In the embryonic visual system anlage drives cells to optic lobe as opposed to Bolwig's organ fate. The polypeptide is Protein tailless (tll) (Drosophila virilis (Fruit fly)).